The following is a 97-amino-acid chain: Protein RADIALIS-like 6 (97 aa).

The 53-residue stretch at 7-59 (SSISPWTFSQNKMFERALAVYDKDTPDRWHNVAKAVGGKTVEEVKRHYDILVE) folds into the SANT domain.

Expressed in the micropylar endosperm surrounding globular-stage embryos but no expression was detected elsewhere, including floral tissues.

It localises to the nucleus. Probable transcription factor. The chain is Protein RADIALIS-like 6 (RL6) from Arabidopsis thaliana (Mouse-ear cress).